A 239-amino-acid chain; its full sequence is Protein TIPIN homolog (239 aa).

2 stretches are compositionally biased toward acidic residues: residues 1–14 and 156–166; these read MDEM…DELD and DGADDDEDDLF. Disordered stretches follow at residues 1–38 and 135–239; these read MDEM…RRII and ESTD…NNDW. Basic and acidic residues-rich tracts occupy residues 169–193 and 206–223; these read LPEK…EKKN and YRMM…AREA. A compositionally biased stretch (acidic residues) spans 224–239; sequence EAEDELMEDFDLNNDW.

This sequence belongs to the CSM3 family.

The protein localises to the cytoplasm. It localises to the nucleus. Its function is as follows. Required for normal progression of S-phase. Important for cell survival after DNA damage or replication stress. In Caenorhabditis briggsae, this protein is Protein TIPIN homolog.